The following is a 155-amino-acid chain: MSRRGTTEEKTAKSDPIYRNRLVNMLVNRILKHGKKSLAYQIIYRAVKKIQQKTETNPLSVLRQAIHGVTPDIAVKARRVGGSTHQVPIEIGSTQGKALAIRWLLWASRKRPGRNMAFKLSSELVDAAKGSGDAIRKKEETHRMAEANRAFAHFR.

This sequence belongs to the universal ribosomal protein uS7 family. In terms of assembly, part of the 30S ribosomal subunit.

Its subcellular location is the plastid. It is found in the chloroplast. Its function is as follows. One of the primary rRNA binding proteins, it binds directly to 16S rRNA where it nucleates assembly of the head domain of the 30S subunit. The polypeptide is Small ribosomal subunit protein uS7cz/uS7cy (rps7-A) (Piper cenocladum (Ant piper)).